The following is a 287-amino-acid chain: Shikimate dehydrogenase (NADP(+)) (287 aa).

Shikimate contacts are provided by residues 20-22 and Thr-67; that span reads SRS. Residue Lys-71 is the Proton acceptor of the active site. Position 84 (Glu-84) interacts with NADP(+). Shikimate contacts are provided by Asn-93 and Asp-108. NADP(+) is bound by residues 132-136, 156-161, and Met-226; these read GAGGA and NRTAAR. Residue Tyr-228 coordinates shikimate. Gly-250 contributes to the NADP(+) binding site.

Belongs to the shikimate dehydrogenase family. Homodimer.

It carries out the reaction shikimate + NADP(+) = 3-dehydroshikimate + NADPH + H(+). It functions in the pathway metabolic intermediate biosynthesis; chorismate biosynthesis; chorismate from D-erythrose 4-phosphate and phosphoenolpyruvate: step 4/7. Functionally, involved in the biosynthesis of the chorismate, which leads to the biosynthesis of aromatic amino acids. Catalyzes the reversible NADPH linked reduction of 3-dehydroshikimate (DHSA) to yield shikimate (SA). This is Shikimate dehydrogenase (NADP(+)) from Bordetella pertussis (strain Tohama I / ATCC BAA-589 / NCTC 13251).